Consider the following 208-residue polypeptide: Small ribosomal subunit protein uS4 (208 aa).

The disordered stretch occupies residues 29–48 (MERRPYGPGQHGRARRKQDS). Residues 95-155 (QRLDALVLRA…ERSEKMVPFQ (61 aa)) form the S4 RNA-binding domain.

It belongs to the universal ribosomal protein uS4 family. Part of the 30S ribosomal subunit. Contacts protein S5. The interaction surface between S4 and S5 is involved in control of translational fidelity.

In terms of biological role, one of the primary rRNA binding proteins, it binds directly to 16S rRNA where it nucleates assembly of the body of the 30S subunit. Functionally, with S5 and S12 plays an important role in translational accuracy. The sequence is that of Small ribosomal subunit protein uS4 from Micrococcus luteus (strain ATCC 4698 / DSM 20030 / JCM 1464 / CCM 169 / CCUG 5858 / IAM 1056 / NBRC 3333 / NCIMB 9278 / NCTC 2665 / VKM Ac-2230) (Micrococcus lysodeikticus).